We begin with the raw amino-acid sequence, 164 residues long: Protein-export protein SecB (164 aa).

The protein belongs to the SecB family. In terms of assembly, homotetramer, a dimer of dimers. One homotetramer interacts with 1 SecA dimer.

The protein resides in the cytoplasm. One of the proteins required for the normal export of preproteins out of the cell cytoplasm. It is a molecular chaperone that binds to a subset of precursor proteins, maintaining them in a translocation-competent state. It also specifically binds to its receptor SecA. The chain is Protein-export protein SecB from Stutzerimonas stutzeri (strain A1501) (Pseudomonas stutzeri).